The primary structure comprises 238 residues: Purine nucleoside phosphorylase DeoD-type (238 aa).

Histidine 4 is a binding site for a purine D-ribonucleoside. Phosphate contacts are provided by residues glycine 20, arginine 24, arginine 43, and 87–90; that span reads RIGS. A purine D-ribonucleoside is bound by residues 181 to 183 and 205 to 206; these read EME and SD. Aspartate 206 acts as the Proton donor in catalysis.

This sequence belongs to the PNP/UDP phosphorylase family. As to quaternary structure, homohexamer; trimer of homodimers.

It catalyses the reaction a purine D-ribonucleoside + phosphate = a purine nucleobase + alpha-D-ribose 1-phosphate. The enzyme catalyses a purine 2'-deoxy-D-ribonucleoside + phosphate = a purine nucleobase + 2-deoxy-alpha-D-ribose 1-phosphate. Catalyzes the reversible phosphorolytic breakdown of the N-glycosidic bond in the beta-(deoxy)ribonucleoside molecules, with the formation of the corresponding free purine bases and pentose-1-phosphate. This Mycoplasma pneumoniae (strain ATCC 29342 / M129 / Subtype 1) (Mycoplasmoides pneumoniae) protein is Purine nucleoside phosphorylase DeoD-type.